We begin with the raw amino-acid sequence, 250 residues long: Triosephosphate isomerase (250 aa).

9–11 (NWK) is a binding site for substrate. The Electrophile role is filled by histidine 96. Glutamate 166 functions as the Proton acceptor in the catalytic mechanism. Residues glycine 172, serine 212, and 233 to 234 (GG) contribute to the substrate site.

The protein belongs to the triosephosphate isomerase family. In terms of assembly, homodimer.

It is found in the cytoplasm. The catalysed reaction is D-glyceraldehyde 3-phosphate = dihydroxyacetone phosphate. It participates in carbohydrate biosynthesis; gluconeogenesis. It functions in the pathway carbohydrate degradation; glycolysis; D-glyceraldehyde 3-phosphate from glycerone phosphate: step 1/1. Its function is as follows. Involved in the gluconeogenesis. Catalyzes stereospecifically the conversion of dihydroxyacetone phosphate (DHAP) to D-glyceraldehyde-3-phosphate (G3P). This chain is Triosephosphate isomerase, found in Chlorobium phaeobacteroides (strain BS1).